The primary structure comprises 163 residues: NADH-quinone oxidoreductase subunit I (163 aa).

4Fe-4S ferredoxin-type domains follow at residues 54 to 84 (LRRY…IDSA) and 94 to 123 (TRYD…ETHI). Cysteine 64, cysteine 67, cysteine 70, cysteine 74, cysteine 103, cysteine 106, cysteine 109, and cysteine 113 together coordinate [4Fe-4S] cluster.

This sequence belongs to the complex I 23 kDa subunit family. In terms of assembly, NDH-1 is composed of 14 different subunits. Subunits NuoA, H, J, K, L, M, N constitute the membrane sector of the complex. [4Fe-4S] cluster serves as cofactor.

It is found in the cell inner membrane. It carries out the reaction a quinone + NADH + 5 H(+)(in) = a quinol + NAD(+) + 4 H(+)(out). Its function is as follows. NDH-1 shuttles electrons from NADH, via FMN and iron-sulfur (Fe-S) centers, to quinones in the respiratory chain. The immediate electron acceptor for the enzyme in this species is believed to be ubiquinone. Couples the redox reaction to proton translocation (for every two electrons transferred, four hydrogen ions are translocated across the cytoplasmic membrane), and thus conserves the redox energy in a proton gradient. This is NADH-quinone oxidoreductase subunit I from Xanthomonas campestris pv. campestris (strain 8004).